A 99-amino-acid chain; its full sequence is Malonate decarboxylase acyl carrier protein (99 aa).

Serine 25 carries the O-(phosphoribosyl dephospho-coenzyme A)serine modification.

It belongs to the MdcC family. In terms of processing, covalently binds the prosthetic group of malonate decarboxylase.

The protein resides in the cytoplasm. Subunit of malonate decarboxylase, it is an acyl carrier protein to which acetyl and malonyl thioester residues are bound via a 2'-(5''-phosphoribosyl)-3'-dephospho-CoA prosthetic group and turn over during the catalytic mechanism. The polypeptide is Malonate decarboxylase acyl carrier protein (Stutzerimonas stutzeri (strain A1501) (Pseudomonas stutzeri)).